A 310-amino-acid polypeptide reads, in one-letter code: Ribose-phosphate pyrophosphokinase (310 aa).

ATP is bound by residues 34-36 (DGE) and 93-94 (RQ). Mg(2+) is bound by residues His-127 and Asp-167. Lys-190 is a catalytic residue. D-ribose 5-phosphate-binding positions include Arg-192, Asp-216, and 220–224 (DSGGT).

This sequence belongs to the ribose-phosphate pyrophosphokinase family. Class I subfamily. As to quaternary structure, homohexamer. It depends on Mg(2+) as a cofactor.

The protein resides in the cytoplasm. The catalysed reaction is D-ribose 5-phosphate + ATP = 5-phospho-alpha-D-ribose 1-diphosphate + AMP + H(+). It functions in the pathway metabolic intermediate biosynthesis; 5-phospho-alpha-D-ribose 1-diphosphate biosynthesis; 5-phospho-alpha-D-ribose 1-diphosphate from D-ribose 5-phosphate (route I): step 1/1. Functionally, involved in the biosynthesis of the central metabolite phospho-alpha-D-ribosyl-1-pyrophosphate (PRPP) via the transfer of pyrophosphoryl group from ATP to 1-hydroxyl of ribose-5-phosphate (Rib-5-P). In Maricaulis maris (strain MCS10) (Caulobacter maris), this protein is Ribose-phosphate pyrophosphokinase.